A 92-amino-acid chain; its full sequence is MSSITRDSQPALRAGVRLQHDRTRDQWVLLAPERVVELDEIALVVAQRYDGTRSLAQIAQELAAEFDADAADIEADVIELTATLQQKRLLRL.

The protein belongs to the PqqD family. As to quaternary structure, monomer. Interacts with PqqE.

Its pathway is cofactor biosynthesis; pyrroloquinoline quinone biosynthesis. Functions as a PqqA binding protein and presents PqqA to PqqE, in the pyrroloquinoline quinone (PQQ) biosynthetic pathway. The polypeptide is PqqA binding protein (Xanthomonas oryzae pv. oryzae (strain MAFF 311018)).